The chain runs to 420 residues: Pyrin and HIN domain-containing protein 1 (420 aa).

The region spanning 1–87 (MVNEYKRIVL…ANKLKNEKAK (87 aa)) is the Pyrin domain. Disordered stretches follow at residues 82–201 (KNEK…SSSA) and 216–236 (RLKN…GSKK). Positions 87–102 (KAKRTRTGKRKTAAKR) are enriched in basic residues. Polar residues-rich tracts occupy residues 108–118 (PSTSQPMSTTN) and 126–151 (GRST…AIQI). Over residues 152–169 (SPTIASSSGQTSSRSSET) the composition is skewed to low complexity. The segment covering 170-201 (LQSIIQSPKTPKRPSSSILDPPVSSGTASSSA) has biased composition (polar residues). One can recognise an HIN-200 domain in the interval 219–416 (NVPKEPSEEN…STTHSNMQVI (198 aa)). Basic and acidic residues predominate over residues 220-229 (VPKEPSEENG).

It belongs to the HIN-200 family.

Its subcellular location is the nucleus. This chain is Pyrin and HIN domain-containing protein 1, found in Mus musculus (Mouse).